The following is a 408-amino-acid chain: MMIKVASITKLENGSIVTPKGFSAIGTVNGLKKEKKDLGAIVCDVPASCAAVYTTNQIQAAPLQVTKDSITAEGKLQAIIVNSGNANACTGMQGLQDAYEMRVLGAEHFGMKENYVAVASTGVIGVPLPMDIIRKGVATLIPTKEESEAYSFSEAILTTDLITKETCYEMIIDGKKVVIAGVAKGSGMIHPNMATMLSFITTDAHIEHNVLQTALSQITNHTFNQITVDGDTSTNDMVIVMASGLSETRPINMEHTDWETFVGALQKVCEDLAKKIAQDGEGATKLIEVNVLGAQTNEEAKKIAKQIVGSSLVKTAIHGEDPNWGRIISSIGQSEVAINPNTIDITLQSISVLKNSEPQTFSEEKMKERLQEDEIVINVYLHLGEETGSAWGCDLSYEYVKINACYRT.

The substrate site is built by Thr-158, Lys-184, Thr-195, Glu-281, Asn-403, and Thr-408. Thr-195 acts as the Nucleophile in catalysis.

This sequence belongs to the ArgJ family. As to quaternary structure, heterotetramer of two alpha and two beta chains.

The protein resides in the cytoplasm. It catalyses the reaction N(2)-acetyl-L-ornithine + L-glutamate = N-acetyl-L-glutamate + L-ornithine. The enzyme catalyses L-glutamate + acetyl-CoA = N-acetyl-L-glutamate + CoA + H(+). It participates in amino-acid biosynthesis; L-arginine biosynthesis; L-ornithine and N-acetyl-L-glutamate from L-glutamate and N(2)-acetyl-L-ornithine (cyclic): step 1/1. It functions in the pathway amino-acid biosynthesis; L-arginine biosynthesis; N(2)-acetyl-L-ornithine from L-glutamate: step 1/4. In terms of biological role, catalyzes two activities which are involved in the cyclic version of arginine biosynthesis: the synthesis of N-acetylglutamate from glutamate and acetyl-CoA as the acetyl donor, and of ornithine by transacetylation between N(2)-acetylornithine and glutamate. In Bacillus cereus (strain ATCC 14579 / DSM 31 / CCUG 7414 / JCM 2152 / NBRC 15305 / NCIMB 9373 / NCTC 2599 / NRRL B-3711), this protein is Arginine biosynthesis bifunctional protein ArgJ.